Consider the following 484-residue polypeptide: tRNA sulfurtransferase (484 aa).

Residues 63-167 (EAFGERLACI…NDNLYLIDKR (105 aa)) form the THUMP domain. ATP contacts are provided by residues 185 to 186 (LI), lysine 267, glycine 289, and glutamine 298. An intrachain disulfide couples cysteine 346 to cysteine 458. Positions 406–484 (INANEIIIDV…GYTNVKVYRP (79 aa)) constitute a Rhodanese domain. Catalysis depends on cysteine 458, which acts as the Cysteine persulfide intermediate.

The protein belongs to the ThiI family.

Its subcellular location is the cytoplasm. The catalysed reaction is [ThiI sulfur-carrier protein]-S-sulfanyl-L-cysteine + a uridine in tRNA + 2 reduced [2Fe-2S]-[ferredoxin] + ATP + H(+) = [ThiI sulfur-carrier protein]-L-cysteine + a 4-thiouridine in tRNA + 2 oxidized [2Fe-2S]-[ferredoxin] + AMP + diphosphate. The enzyme catalyses [ThiS sulfur-carrier protein]-C-terminal Gly-Gly-AMP + S-sulfanyl-L-cysteinyl-[cysteine desulfurase] + AH2 = [ThiS sulfur-carrier protein]-C-terminal-Gly-aminoethanethioate + L-cysteinyl-[cysteine desulfurase] + A + AMP + 2 H(+). It functions in the pathway cofactor biosynthesis; thiamine diphosphate biosynthesis. Functionally, catalyzes the ATP-dependent transfer of a sulfur to tRNA to produce 4-thiouridine in position 8 of tRNAs, which functions as a near-UV photosensor. Also catalyzes the transfer of sulfur to the sulfur carrier protein ThiS, forming ThiS-thiocarboxylate. This is a step in the synthesis of thiazole, in the thiamine biosynthesis pathway. The sulfur is donated as persulfide by IscS. This Shewanella halifaxensis (strain HAW-EB4) protein is tRNA sulfurtransferase.